The chain runs to 395 residues: Elongation factor Tu (395 aa).

Positions 10 to 205 (KVHMNVGTIG…AMDSYFEDPV (196 aa)) constitute a tr-type G domain. Residues 19-26 (GHVDHGKT) are G1. 19–26 (GHVDHGKT) is a GTP binding site. Position 26 (Thr-26) interacts with Mg(2+). Positions 60-64 (GITIN) are G2. Residues 81–84 (DCPG) are G3. GTP-binding positions include 81–85 (DCPGH) and 136–139 (NKVD). The segment at 136-139 (NKVD) is G4. Residues 173–175 (SAF) are G5.

This sequence belongs to the TRAFAC class translation factor GTPase superfamily. Classic translation factor GTPase family. EF-Tu/EF-1A subfamily. Monomer.

The protein resides in the cytoplasm. The catalysed reaction is GTP + H2O = GDP + phosphate + H(+). Functionally, GTP hydrolase that promotes the GTP-dependent binding of aminoacyl-tRNA to the A-site of ribosomes during protein biosynthesis. The polypeptide is Elongation factor Tu (Treponema pallidum (strain Nichols)).